Consider the following 945-residue polypeptide: Endo-1,4-beta-xylanase 1 (945 aa).

Positions 16–41 (NGDRNPDKKSRESMEVSRKDNEEPEK) are enriched in basic and acidic residues. The interval 16-50 (NGDRNPDKKSRESMEVSRKDNEEPEKQNNNNVASI) is disordered. CBM-cenC domains are found at residues 57–197 (NVIV…EGPS), 227–362 (IVVN…IEGP), and 397–541 (NILT…GPSS). 7 N-linked (GlcNAc...) asparagine glycosylation sites follow: N86, N239, N305, N349, N417, N453, and N687. A GH10 domain is found at 589–884 (SGASVRVRQI…NEAGKRFLAV (296 aa)). E718 functions as the Proton donor in the catalytic mechanism. The Nucleophile role is filled by E819.

The protein belongs to the glycosyl hydrolase 10 (cellulase F) family. Predominantly expressed in vascular bundles, but not in vessel cells. Mostly expressed in stems, at lower levels in roots, and weakly in inflorescences and seedlings.

The protein localises to the secreted. It is found in the cell wall. It carries out the reaction Endohydrolysis of (1-&gt;4)-beta-D-xylosidic linkages in xylans.. It participates in glycan degradation; xylan degradation. Binds to and hydrolyzes insoluble and soluble xylan substrates. Exhibits xylanase activity. The protein is Endo-1,4-beta-xylanase 1 of Arabidopsis thaliana (Mouse-ear cress).